The primary structure comprises 576 residues: Dihydroxy-acid dehydratase (576 aa).

C56 is a [2Fe-2S] cluster binding site. Mg(2+) is bound at residue D88. A [2Fe-2S] cluster-binding site is contributed by C129. Mg(2+)-binding residues include D130 and K131. Residue K131 is modified to N6-carboxylysine. C201 lines the [2Fe-2S] cluster pocket. E453 lines the Mg(2+) pocket. S479 functions as the Proton acceptor in the catalytic mechanism.

This sequence belongs to the IlvD/Edd family. In terms of assembly, homodimer. [2Fe-2S] cluster serves as cofactor. The cofactor is Mg(2+).

It carries out the reaction (2R)-2,3-dihydroxy-3-methylbutanoate = 3-methyl-2-oxobutanoate + H2O. It catalyses the reaction (2R,3R)-2,3-dihydroxy-3-methylpentanoate = (S)-3-methyl-2-oxopentanoate + H2O. It participates in amino-acid biosynthesis; L-isoleucine biosynthesis; L-isoleucine from 2-oxobutanoate: step 3/4. Its pathway is amino-acid biosynthesis; L-valine biosynthesis; L-valine from pyruvate: step 3/4. Its function is as follows. Functions in the biosynthesis of branched-chain amino acids. Catalyzes the dehydration of (2R,3R)-2,3-dihydroxy-3-methylpentanoate (2,3-dihydroxy-3-methylvalerate) into 2-oxo-3-methylpentanoate (2-oxo-3-methylvalerate) and of (2R)-2,3-dihydroxy-3-methylbutanoate (2,3-dihydroxyisovalerate) into 2-oxo-3-methylbutanoate (2-oxoisovalerate), the penultimate precursor to L-isoleucine and L-valine, respectively. The sequence is that of Dihydroxy-acid dehydratase from Parvibaculum lavamentivorans (strain DS-1 / DSM 13023 / NCIMB 13966).